A 138-amino-acid polypeptide reads, in one-letter code: HTH-type transcriptional regulator CymR (138 aa).

Residues 2-125 (KISTKGRYGL…DSTTLEDLAS (124 aa)) enclose the HTH rrf2-type domain. Residues 28–51 (LKSIAQTNNLSEHYLEQLVSPLRN) constitute a DNA-binding region (H-T-H motif).

Homodimer. Forms homotetramers at higher concentrations of protein. Forms CymR(2):CysK(2) or CymR(4):CysK(4) complexes in the absence of O-acetylserine.

Functionally, master repressor of cysteine metabolism in B.subtilis. Controls the expression of genes involved either in cysteine synthesis from sulfide (cysK), sulfonates (ssu), or methionine (mccAB) or in cystine uptake (tcyP). Activity of CymR is positively regulated by CysK in response to cysteine availability. When cysteine is present, the pool of O-acetylserine (OAS) is low, which leads to the formation of a CymR-CysK complex and transcriptional repression of the CymR regulon occurs. In the absence of cysteine, the OAS pool is high and the CymR-CysK complex is mostly dissociated, leading to a faster dissociation of CymR from its DNA targets and the lifting of CymR-dependent repression. This chain is HTH-type transcriptional regulator CymR (cymR), found in Bacillus subtilis (strain 168).